The following is a 386-amino-acid chain: Putative nickel insertion protein (386 aa).

This sequence belongs to the LarC family.

This Dictyoglomus thermophilum (strain ATCC 35947 / DSM 3960 / H-6-12) protein is Putative nickel insertion protein.